Consider the following 224-residue polypeptide: Probable C-&gt;U-editing enzyme APOBEC-2 (224 aa).

The disordered stretch occupies residues 1–25 (MAQKEEAAAAAEPASQNGEEVENLE). Zn(2+)-binding residues include Glu-60 and His-98. The region spanning 64-169 (GRNKTFLCYV…PEIQAALRKL (106 aa)) is the CMP/dCMP-type deaminase domain. Glu-100 functions as the Proton donor in the catalytic mechanism. The Zn(2+) site is built by Cys-128 and Cys-131.

Belongs to the cytidine and deoxycytidylate deaminase family. In terms of assembly, homotetramer. Requires Zn(2+) as cofactor.

It catalyses the reaction cytidine(6666) in apoB mRNA + H2O + H(+) = uridine(6666) in apoB mRNA + NH4(+). Functionally, probable C to U editing enzyme whose physiological substrate is not yet known. Does not display detectable apoB mRNA editing. Has a low intrinsic cytidine deaminase activity. May play a role in the epigenetic regulation of gene expression through the process of active DNA demethylation. The polypeptide is Probable C-&gt;U-editing enzyme APOBEC-2 (APOBEC2) (Bos taurus (Bovine)).